A 231-amino-acid polypeptide reads, in one-letter code: Cytidylate kinase (231 aa).

11-19 (GHSSCGKST) provides a ligand contact to ATP.

It belongs to the cytidylate kinase family. Type 1 subfamily.

The protein resides in the cytoplasm. It carries out the reaction CMP + ATP = CDP + ADP. The enzyme catalyses dCMP + ATP = dCDP + ADP. This Porphyromonas gingivalis (strain ATCC BAA-308 / W83) protein is Cytidylate kinase.